The sequence spans 434 residues: Ribosomal protein uS12 methylthiotransferase RimO (434 aa).

Residues Ala2–Pro112 form the MTTase N-terminal domain. Residues Cys11, Cys47, Cys76, Cys142, Cys146, and Cys149 each coordinate [4Fe-4S] cluster. The 238-residue stretch at Leu128–Arg365 folds into the Radical SAM core domain. One can recognise a TRAM domain in the interval Gln368–Ala434.

This sequence belongs to the methylthiotransferase family. RimO subfamily. The cofactor is [4Fe-4S] cluster.

It is found in the cytoplasm. It carries out the reaction L-aspartate(89)-[ribosomal protein uS12]-hydrogen + (sulfur carrier)-SH + AH2 + 2 S-adenosyl-L-methionine = 3-methylsulfanyl-L-aspartate(89)-[ribosomal protein uS12]-hydrogen + (sulfur carrier)-H + 5'-deoxyadenosine + L-methionine + A + S-adenosyl-L-homocysteine + 2 H(+). In terms of biological role, catalyzes the methylthiolation of an aspartic acid residue of ribosomal protein uS12. The protein is Ribosomal protein uS12 methylthiotransferase RimO of Thermus thermophilus (strain ATCC BAA-163 / DSM 7039 / HB27).